The primary structure comprises 180 residues: ATP-dependent protease subunit HslV (180 aa).

The active site involves Thr-9. Na(+) contacts are provided by Ala-164, Cys-167, and Thr-170.

The protein belongs to the peptidase T1B family. HslV subfamily. As to quaternary structure, a double ring-shaped homohexamer of HslV is capped on each side by a ring-shaped HslU homohexamer. The assembly of the HslU/HslV complex is dependent on binding of ATP.

Its subcellular location is the cytoplasm. The enzyme catalyses ATP-dependent cleavage of peptide bonds with broad specificity.. Its activity is regulated as follows. Allosterically activated by HslU binding. Protease subunit of a proteasome-like degradation complex believed to be a general protein degrading machinery. The polypeptide is ATP-dependent protease subunit HslV (Leptospira interrogans serogroup Icterohaemorrhagiae serovar Lai (strain 56601)).